A 362-amino-acid polypeptide reads, in one-letter code: N-acylethanolamine-hydrolyzing acid amidase (362 aa).

The signal sequence occupies residues 1–33; the sequence is MGTLATRAACHGAHLALALLLLLSLSGPWLSAV. N42 and N112 each carry an N-linked (GlcNAc...) asparagine glycan. C131 serves as the catalytic Nucleophile. 2 N-linked (GlcNAc...) asparagine glycosylation sites follow: N314 and N338.

Belongs to the acid ceramidase family. As to quaternary structure, heterodimer of an alpha and a beta subunit, produced by autocatalytic cleavage. N-glycosylated. Tunicamycin treatment causes a reduction in specific activity against N-palmitoylethanolamine. In terms of processing, autoproteolytic cleavage at pH 4.5 gives rise to the alpha and beta subunit. Cleavage gives rise to a conformation change that activates the enzyme. The same catalytic Cys residue mediates the autoproteolytic cleavage and subsequent hydrolysis of lipid substrates.

It is found in the lysosome. The protein resides in the membrane. It carries out the reaction N-hexadecanoylethanolamine + H2O = ethanolamine + hexadecanoate. It catalyses the reaction an N-(long-chain fatty acyl)ethanolamine + H2O = a long-chain fatty acid + ethanolamine. The enzyme catalyses N-dodecanoylethanolamine + H2O = dodecanoate + ethanolamine. The catalysed reaction is N-tetradecanoylethanolamine + H2O = tetradecanoate + ethanolamine. It carries out the reaction an N-acylsphing-4-enine + H2O = sphing-4-enine + a fatty acid. It catalyses the reaction N-hexadecanoylsphing-4-enine + H2O = sphing-4-enine + hexadecanoate. The enzyme catalyses N-dodecanoylsphing-4-enine + H2O = dodecanoate + sphing-4-enine. Its pathway is lipid metabolism; fatty acid metabolism. In terms of biological role, degrades bioactive fatty acid amides to their corresponding acids, with the following preference: N-palmitoylethanolamine &gt; N-myristoylethanolamine &gt; N-stearoylethanolamine &gt; N-oleoylethanolamine &gt; N-linoleoylethanolamine &gt; N-arachidonoylethanolamine. This is N-acylethanolamine-hydrolyzing acid amidase from Mus musculus (Mouse).